Here is a 308-residue protein sequence, read N- to C-terminus: Cytochrome b (308 aa).

The next 4 helical transmembrane spans lie at 1–21, 45–66, 81–101, and 146–166; these read FGSL…LMAM, WLIR…YLHI, WNTG…GYVL, and FFAL…VHLT. Residues His51 and His65 each coordinate heme b. Residues His150 and His164 each contribute to the heme b site. An a ubiquinone-binding site is contributed by His169. Helical transmembrane passes span 194–214, 256–276, and 288–308; these read IKDI…AMFS, LGGV…PFLH, and LSQL…WVGS.

The protein belongs to the cytochrome b family. The cytochrome bc1 complex contains 11 subunits: 3 respiratory subunits (MT-CYB, CYC1 and UQCRFS1), 2 core proteins (UQCRC1 and UQCRC2) and 6 low-molecular weight proteins (UQCRH/QCR6, UQCRB/QCR7, UQCRQ/QCR8, UQCR10/QCR9, UQCR11/QCR10 and a cleavage product of UQCRFS1). This cytochrome bc1 complex then forms a dimer. Heme b serves as cofactor.

The protein localises to the mitochondrion inner membrane. In terms of biological role, component of the ubiquinol-cytochrome c reductase complex (complex III or cytochrome b-c1 complex) that is part of the mitochondrial respiratory chain. The b-c1 complex mediates electron transfer from ubiquinol to cytochrome c. Contributes to the generation of a proton gradient across the mitochondrial membrane that is then used for ATP synthesis. In Scytalopus magellanicus (Magellanic tapaculo), this protein is Cytochrome b (MT-CYB).